A 137-amino-acid polypeptide reads, in one-letter code: Putative pre-16S rRNA nuclease (137 aa).

Belongs to the YqgF nuclease family.

The protein resides in the cytoplasm. In terms of biological role, could be a nuclease involved in processing of the 5'-end of pre-16S rRNA. This Clostridium botulinum (strain Eklund 17B / Type B) protein is Putative pre-16S rRNA nuclease.